A 318-amino-acid polypeptide reads, in one-letter code: Methionyl-tRNA formyltransferase (318 aa).

A (6S)-5,6,7,8-tetrahydrofolate-binding site is contributed by 113–116 (SLLP).

It belongs to the Fmt family.

It catalyses the reaction L-methionyl-tRNA(fMet) + (6R)-10-formyltetrahydrofolate = N-formyl-L-methionyl-tRNA(fMet) + (6S)-5,6,7,8-tetrahydrofolate + H(+). In terms of biological role, attaches a formyl group to the free amino group of methionyl-tRNA(fMet). The formyl group appears to play a dual role in the initiator identity of N-formylmethionyl-tRNA by promoting its recognition by IF2 and preventing the misappropriation of this tRNA by the elongation apparatus. The sequence is that of Methionyl-tRNA formyltransferase from Hahella chejuensis (strain KCTC 2396).